A 422-amino-acid polypeptide reads, in one-letter code: Tyrosine--tRNA ligase (422 aa).

Y35 serves as a coordination point for L-tyrosine. The 'HIGH' region signature appears at 40–49 (PTAASLHVGH). L-tyrosine-binding residues include Y169 and Q173. The 'KMSKS' region signature appears at 229–233 (KFGKT). K232 is an ATP binding site. The region spanning 352-418 (VRLAQLFADT…GKKSLASVAV (67 aa)) is the S4 RNA-binding domain.

This sequence belongs to the class-I aminoacyl-tRNA synthetase family. TyrS type 1 subfamily. As to quaternary structure, homodimer.

The protein resides in the cytoplasm. The enzyme catalyses tRNA(Tyr) + L-tyrosine + ATP = L-tyrosyl-tRNA(Tyr) + AMP + diphosphate + H(+). Catalyzes the attachment of tyrosine to tRNA(Tyr) in a two-step reaction: tyrosine is first activated by ATP to form Tyr-AMP and then transferred to the acceptor end of tRNA(Tyr). This chain is Tyrosine--tRNA ligase, found in Kineococcus radiotolerans (strain ATCC BAA-149 / DSM 14245 / SRS30216).